A 447-amino-acid chain; its full sequence is N-succinylarginine dihydrolase (447 aa).

Substrate-binding positions include 19-28, N110, and 137-138; these read AGLSFGNEAS and HR. E174 is an active-site residue. R212 is a binding site for substrate. H248 is an active-site residue. Substrate is bound by residues D250 and N359. Residue C365 is the Nucleophile of the active site.

The protein belongs to the succinylarginine dihydrolase family. Homodimer.

It carries out the reaction N(2)-succinyl-L-arginine + 2 H2O + 2 H(+) = N(2)-succinyl-L-ornithine + 2 NH4(+) + CO2. The protein operates within amino-acid degradation; L-arginine degradation via AST pathway; L-glutamate and succinate from L-arginine: step 2/5. In terms of biological role, catalyzes the hydrolysis of N(2)-succinylarginine into N(2)-succinylornithine, ammonia and CO(2). This is N-succinylarginine dihydrolase from Salmonella paratyphi A (strain ATCC 9150 / SARB42).